The chain runs to 463 residues: Adenylosuccinate synthetase, chloroplastic (463 aa).

GTP contacts are provided by residues 44-50 (GDEGKGK) and 72-74 (GHT). Residue D45 is the Proton acceptor of the active site. Positions 45 and 72 each coordinate Mg(2+). IMP-binding positions include 45-48 (DEGK), 70-73 (NAGH), T164, R178, N256, T271, and R335. Catalysis depends on H73, which acts as the Proton donor. 331-337 (TTTGRPR) lines the substrate pocket. Residues R337, 363-365 (KLD), and 446-448 (GVG) contribute to the GTP site.

This sequence belongs to the adenylosuccinate synthetase family. In terms of assembly, homodimer. Requires Mg(2+) as cofactor.

The protein localises to the plastid. It localises to the chloroplast. The enzyme catalyses IMP + L-aspartate + GTP = N(6)-(1,2-dicarboxyethyl)-AMP + GDP + phosphate + 2 H(+). It participates in purine metabolism; AMP biosynthesis via de novo pathway; AMP from IMP: step 1/2. Its function is as follows. Plays an important role in the de novo pathway and in the salvage pathway of purine nucleotide biosynthesis. Catalyzes the first committed step in the biosynthesis of AMP from IMP. This chain is Adenylosuccinate synthetase, chloroplastic, found in Chlamydomonas reinhardtii (Chlamydomonas smithii).